The primary structure comprises 328 residues: 6-phosphogluconolactonase (328 aa).

Belongs to the cycloisomerase 2 family.

The enzyme catalyses 6-phospho-D-glucono-1,5-lactone + H2O = 6-phospho-D-gluconate + H(+). The protein operates within carbohydrate degradation; pentose phosphate pathway; D-ribulose 5-phosphate from D-glucose 6-phosphate (oxidative stage): step 2/3. Its function is as follows. Catalyzes the hydrolysis of 6-phosphogluconolactone to 6-phosphogluconate. The protein is 6-phosphogluconolactonase of Xenorhabdus nematophila (strain ATCC 19061 / DSM 3370 / CCUG 14189 / LMG 1036 / NCIMB 9965 / AN6).